Consider the following 637-residue polypeptide: Chaperone protein HtpG (637 aa).

The a; substrate-binding stretch occupies residues 1–345; sequence MSQQETHGFQ…SNDLPLNVSR (345 aa). The tract at residues 346-562 is b; that stretch reads EILQDNHVTK…DGEMSTQMIK (217 aa). The tract at residues 563–637 is c; sequence LMQAAGQPVP…MNQMLLANMK (75 aa).

It belongs to the heat shock protein 90 family. As to quaternary structure, homodimer.

It is found in the cytoplasm. Functionally, molecular chaperone. Has ATPase activity. This Shewanella baltica (strain OS155 / ATCC BAA-1091) protein is Chaperone protein HtpG.